The primary structure comprises 407 residues: MTETTSKTAPWTVEKRTAILVLADGTVIEGKGLGAIGAIEAEVVFNTALTGYEEILTDPSYAGQIVTFTFPHIGNVGTNAEDVEDLTPANRHGAVGAIFKADITSPSNFRATEDLDAWLKNRGVIALAGIDTRALTSLIRERGAQNAVIAHDPSGKFDLEALKARAAAWSGLENLDLAKDVTVGQSLTWKETPWTLADGYGEQDTPEYHVVALDFGVKRNILRLLTGLGAKVTVLPATATAEDVLAHNPDGVFLSNGPGDPAATGAYAVPTIKKLVETDLPVFGICLGHQMLALALGGRTEKMHQGHHGANHPVKDYTTGKVEIVSMNHGFAVDSDSLPENVEETHVSLFDGTNCGLRVVGKPVFSVQHHPEASPGPQDSHYLFRRFINLIREKKGETPLPEREQAA.

A CPSase region spans residues 1 to 205 (MTETTSKTAP…LADGYGEQDT (205 aa)). Residues serine 60, glycine 257, and glycine 259 each coordinate L-glutamine. The Glutamine amidotransferase type-1 domain occupies 209 to 397 (HVVALDFGVK…INLIREKKGE (189 aa)). The active-site Nucleophile is cysteine 286. Leucine 287, glutamine 290, asparagine 328, glycine 330, and phenylalanine 331 together coordinate L-glutamine. Catalysis depends on residues histidine 370 and glutamate 372.

This sequence belongs to the CarA family. In terms of assembly, composed of two chains; the small (or glutamine) chain promotes the hydrolysis of glutamine to ammonia, which is used by the large (or ammonia) chain to synthesize carbamoyl phosphate. Tetramer of heterodimers (alpha,beta)4.

The enzyme catalyses hydrogencarbonate + L-glutamine + 2 ATP + H2O = carbamoyl phosphate + L-glutamate + 2 ADP + phosphate + 2 H(+). It carries out the reaction L-glutamine + H2O = L-glutamate + NH4(+). Its pathway is amino-acid biosynthesis; L-arginine biosynthesis; carbamoyl phosphate from bicarbonate: step 1/1. It functions in the pathway pyrimidine metabolism; UMP biosynthesis via de novo pathway; (S)-dihydroorotate from bicarbonate: step 1/3. Functionally, small subunit of the glutamine-dependent carbamoyl phosphate synthetase (CPSase). CPSase catalyzes the formation of carbamoyl phosphate from the ammonia moiety of glutamine, carbonate, and phosphate donated by ATP, constituting the first step of 2 biosynthetic pathways, one leading to arginine and/or urea and the other to pyrimidine nucleotides. The small subunit (glutamine amidotransferase) binds and cleaves glutamine to supply the large subunit with the substrate ammonia. This chain is Carbamoyl phosphate synthase small chain, found in Brucella anthropi (strain ATCC 49188 / DSM 6882 / CCUG 24695 / JCM 21032 / LMG 3331 / NBRC 15819 / NCTC 12168 / Alc 37) (Ochrobactrum anthropi).